The following is a 338-amino-acid chain: Anthranilate phosphoribosyltransferase (338 aa).

Residues glycine 81, 84–85, threonine 89, 91–94, 109–117, and serine 121 contribute to the 5-phospho-alpha-D-ribose 1-diphosphate site; these read GD, NIST, and KHGNRGVSS. Glycine 81 contributes to the anthranilate binding site. A Mg(2+)-binding site is contributed by serine 93. Asparagine 112 provides a ligand contact to anthranilate. Position 167 (arginine 167) interacts with anthranilate. Aspartate 225 and glutamate 226 together coordinate Mg(2+).

It belongs to the anthranilate phosphoribosyltransferase family. Homodimer. Requires Mg(2+) as cofactor.

It catalyses the reaction N-(5-phospho-beta-D-ribosyl)anthranilate + diphosphate = 5-phospho-alpha-D-ribose 1-diphosphate + anthranilate. The protein operates within amino-acid biosynthesis; L-tryptophan biosynthesis; L-tryptophan from chorismate: step 2/5. Functionally, catalyzes the transfer of the phosphoribosyl group of 5-phosphorylribose-1-pyrophosphate (PRPP) to anthranilate to yield N-(5'-phosphoribosyl)-anthranilate (PRA). In Methanoculleus marisnigri (strain ATCC 35101 / DSM 1498 / JR1), this protein is Anthranilate phosphoribosyltransferase.